The primary structure comprises 410 residues: Bifunctional enzyme IspD/IspF (410 aa).

The tract at residues 1–257 is 2-C-methyl-D-erythritol 4-phosphate cytidylyltransferase; it reads MSHDPVVPSA…AGAGSASSRL (257 aa). Residues 258 to 410 form a 2-C-methyl-D-erythritol 2,4-cyclodiphosphate synthase region; it reads RSGIGTDVHA…AVATALVERL (153 aa). Residues D264 and H266 each coordinate a divalent metal cation. 4-CDP-2-C-methyl-D-erythritol 2-phosphate contacts are provided by residues 264 to 266 and 290 to 291; these read DVH and HS. A divalent metal cation is bound at residue H298. Residues 312-314, 385-388, F392, and R395 each bind 4-CDP-2-C-methyl-D-erythritol 2-phosphate; these read DIG and TTTD.

In the N-terminal section; belongs to the IspD/TarI cytidylyltransferase family. IspD subfamily. The protein in the C-terminal section; belongs to the IspF family. A divalent metal cation is required as a cofactor.

The enzyme catalyses 2-C-methyl-D-erythritol 4-phosphate + CTP + H(+) = 4-CDP-2-C-methyl-D-erythritol + diphosphate. It carries out the reaction 4-CDP-2-C-methyl-D-erythritol 2-phosphate = 2-C-methyl-D-erythritol 2,4-cyclic diphosphate + CMP. It participates in isoprenoid biosynthesis; isopentenyl diphosphate biosynthesis via DXP pathway; isopentenyl diphosphate from 1-deoxy-D-xylulose 5-phosphate: step 2/6. The protein operates within isoprenoid biosynthesis; isopentenyl diphosphate biosynthesis via DXP pathway; isopentenyl diphosphate from 1-deoxy-D-xylulose 5-phosphate: step 4/6. In terms of biological role, bifunctional enzyme that catalyzes the formation of 4-diphosphocytidyl-2-C-methyl-D-erythritol from CTP and 2-C-methyl-D-erythritol 4-phosphate (MEP) (IspD), and catalyzes the conversion of 4-diphosphocytidyl-2-C-methyl-D-erythritol 2-phosphate (CDP-ME2P) to 2-C-methyl-D-erythritol 2,4-cyclodiphosphate (ME-CPP) with a corresponding release of cytidine 5-monophosphate (CMP) (IspF). This Clavibacter michiganensis subsp. michiganensis (strain NCPPB 382) protein is Bifunctional enzyme IspD/IspF.